The sequence spans 352 residues: Photosystem II D2 protein (352 aa).

The residue at position 2 (threonine 2) is an N-acetylthreonine. Threonine 2 carries the phosphothreonine modification. Residues 40–60 (CAYFAVGGWLTGTTFVTSWYT) traverse the membrane as a helical segment. Histidine 117 provides a ligand contact to chlorophyll a. The chain crosses the membrane as a helical span at residues 124-140 (GFMLRQFEIARAIGLRP). Pheophytin a is bound by residues glutamine 129 and asparagine 142. A helical transmembrane segment spans residues 152–165 (VFVSVFLIYPLGQS). Residue histidine 197 coordinates chlorophyll a. The chain crosses the membrane as a helical span at residues 207–227 (AALLCAIHGATVENTLFEDGD). Histidine 214 and phenylalanine 261 together coordinate a plastoquinone. A Fe cation-binding site is contributed by histidine 214. Position 268 (histidine 268) interacts with Fe cation. A helical transmembrane segment spans residues 278 to 294 (GLWMSAIGVVGLALNLR).

The protein belongs to the reaction center PufL/M/PsbA/D family. PSII is composed of 1 copy each of membrane proteins PsbA, PsbB, PsbC, PsbD, PsbE, PsbF, PsbH, PsbI, PsbJ, PsbK, PsbL, PsbM, PsbT, PsbX, PsbY, PsbZ, Psb30/Ycf12, at least 3 peripheral proteins of the oxygen-evolving complex and a large number of cofactors. It forms dimeric complexes. It depends on The D1/D2 heterodimer binds P680, chlorophylls that are the primary electron donor of PSII, and subsequent electron acceptors. It shares a non-heme iron and each subunit binds pheophytin, quinone, additional chlorophylls, carotenoids and lipids. There is also a Cl(-1) ion associated with D1 and D2, which is required for oxygen evolution. The PSII complex binds additional chlorophylls, carotenoids and specific lipids. as a cofactor.

It localises to the plastid. It is found in the chloroplast thylakoid membrane. It catalyses the reaction 2 a plastoquinone + 4 hnu + 2 H2O = 2 a plastoquinol + O2. In terms of biological role, photosystem II (PSII) is a light-driven water:plastoquinone oxidoreductase that uses light energy to abstract electrons from H(2)O, generating O(2) and a proton gradient subsequently used for ATP formation. It consists of a core antenna complex that captures photons, and an electron transfer chain that converts photonic excitation into a charge separation. The D1/D2 (PsbA/PsbD) reaction center heterodimer binds P680, the primary electron donor of PSII as well as several subsequent electron acceptors. D2 is needed for assembly of a stable PSII complex. In Nephroselmis olivacea (Green alga), this protein is Photosystem II D2 protein.